The primary structure comprises 94 residues: Co-chaperonin GroES (94 aa).

This sequence belongs to the GroES chaperonin family. In terms of assembly, heptamer of 7 subunits arranged in a ring. Interacts with the chaperonin GroEL.

It localises to the cytoplasm. Its function is as follows. Together with the chaperonin GroEL, plays an essential role in assisting protein folding. The GroEL-GroES system forms a nano-cage that allows encapsulation of the non-native substrate proteins and provides a physical environment optimized to promote and accelerate protein folding. GroES binds to the apical surface of the GroEL ring, thereby capping the opening of the GroEL channel. The polypeptide is Co-chaperonin GroES (Streptococcus oralis).